The sequence spans 847 residues: MFKCWSVVLVLGFIFLESEGRPTKEGGYGLKSYQPLMRLRHKQEKNQESSRVKGFMIQDGPFGSCENKYCGLGRHCVTSRETGQAECACMDLCKRHYKPVCGSDGEFYENHCEVHRAACLKKQKITIVHNEDCFFKGDKCKTTEYSKMKNMLLDLQNQKYIMQENENPNGDDISRKKLLVDQMFKYFDADSNGLVDINELTQVIKQEELGKDLFDCTLYVLLKYDDFNADKHLALEEFYRAFQVIQLSLPEDQKLSITAATVGQSAVLSCAIQGTLRPPIIWKRNNIILNNLDLEDINDFGDDGSLYITKVTTTHVGNYTCYADGYEQVYQTHIFQVNVPPVIRVYPESQAREPGVTASLRCHAEGIPKPQLGWLKNGIDITPKLSKQLTLQANGSEVHISNVRYEDTGAYTCIAKNEAGVDEDISSLFVEDSARKTLANILWREEGLGIGNMFYVFYEDGIKVIQPIECEFQRHIKPSEKLLGFQDEVCPKAEGDEVQRCVWASAVNVKDKFIYVAQPTLDRVLIVDVQSQKVVQAVSTDPVPVKLHYDKSHDQVWVLSWGTLEKTSPTLQVITLASGNVPHHTIHTQPVGKQFDRVDDFFIPTTTLIITHMRFGFILHKDEAALQKIDLETMSYIKTINLKDYKCVPQSLAYTHLGGYYFIGCKPDSTGAVSPQVMVDGVTDSVIGFNSDVTGTPYVSPDGHYLVSINDVKGLVRVQYITIRGEIQEAFDIYTNLHISDLAFQPSFTEAHQYNIYGSSSTQTDVLFVELSSGKVKMIKSLKEPLKAEEWPWNRKNRQIQDSGLFGQYLMTPSKDSLFILDGRLNKLNCEITEVEKGNTVIWVGDA.

The signal sequence occupies residues 1 to 20 (MFKCWSVVLVLGFIFLESEG). In terms of domain architecture, Kazal-like spans 83–135 (GQAECACMDLCKRHYKPVCGSDGEFYENHCEVHRAACLKKQKITIVHNEDCFF). 3 cysteine pairs are disulfide-bonded: cysteine 89–cysteine 119, cysteine 93–cysteine 112, and cysteine 101–cysteine 133. EF-hand domains follow at residues 175-210 (RKKL…EELG) and 211-246 (KDLF…QVIQ). Ca(2+) contacts are provided by aspartate 188, aspartate 190, asparagine 192, glutamate 199, aspartate 226, asparagine 228, aspartate 230, histidine 232, and glutamate 237. Ig-like domains follow at residues 250–337 (PEDQ…IFQV) and 341–426 (PVIR…EDIS). 2 cysteine pairs are disulfide-bonded: cysteine 270–cysteine 321 and cysteine 362–cysteine 413. N-linked (GlcNAc...) asparagine glycosylation is found at asparagine 318 and asparagine 394.

Its subcellular location is the secreted. This chain is Follistatin-related protein 5 (FSTL5), found in Homo sapiens (Human).